A 976-amino-acid polypeptide reads, in one-letter code: Ephrin type-B receptor 4b (976 aa).

Residues 1-23 (MDRVCWIMALSWFWMVSTGLVSA) form the signal peptide. Residues 24–541 (EEEVLMNTKL…ESPSRLMLTG (518 aa)) are Extracellular-facing. The Eph LBD domain occupies 25-204 (EEVLMNTKLE…FFKKCPAVSR (180 aa)). 2 disulfides stabilise this stretch: cysteine 69–cysteine 186 and cysteine 103–cysteine 113. Fibronectin type-III domains are found at residues 326-434 (PPSA…TSRD) and 438-529 (PVSG…TLPD). The chain crosses the membrane as a helical span at residues 542–562 (VLVAIGLLILIAVVIVAVFCF). Residues 563-976 (RRSTRRRDPD…LRIHGGSLRY (414 aa)) lie on the Cytoplasmic side of the membrane. Residues 613–897 (VKIEEVIGAG…IPDGPSHPLL (285 aa)) enclose the Protein kinase domain. Residues 619 to 627 (IGAGEFGEV) and lysine 645 each bind ATP. Aspartate 738 serves as the catalytic Proton acceptor. An SAM domain is found at 906 to 970 (SHCSSVADWL…LSSVQTLRIH (65 aa)).

This sequence belongs to the protein kinase superfamily. Tyr protein kinase family. Ephrin receptor subfamily.

The protein resides in the cell membrane. The catalysed reaction is L-tyrosyl-[protein] + ATP = O-phospho-L-tyrosyl-[protein] + ADP + H(+). Functionally, receptor tyrosine kinase which binds promiscuously transmembrane ephrin-B family ligands residing on adjacent cells, leading to contact-dependent bidirectional signaling into neighboring cells. The signaling pathway downstream of the receptor is referred to as forward signaling while the signaling pathway downstream of the ephrin ligand is referred to as reverse signaling. Together with its cognate ligand/functional ligand EFNB2 is involved in the regulation of cell adhesion and cell migration, and plays a central role in heart morphogenesis, angiogenesis and blood vessel remodeling and permeability. EPHB4-mediated forward signaling controls cellular repulsion and segregation from EFNB2-expressing cells. Involved in somitogenesis. This chain is Ephrin type-B receptor 4b, found in Danio rerio (Zebrafish).